Reading from the N-terminus, the 822-residue chain is ATP-dependent zinc metalloprotease FTSH 7, chloroplastic (822 aa).

Low complexity-rich tracts occupy residues 1–34, 80–94, and 101–122; these read MASA…RRAS, AEAS…SSSG, and AAAA…AAAT. Disordered stretches follow at residues 1-44 and 67-136; these read MASA…ASVR and PAAR…ENKW. The N-terminal 70 residues, 1–70, are a transit peptide targeting the chloroplast; the sequence is MASASAAAET…RVLRRPPAAR (70 aa). 2 helical membrane-spanning segments follow: residues 154–174 and 288–308; these read IVQG…IFAL and GGLL…AVVL. 386-393 contributes to the ATP binding site; the sequence is GLPGTGKT. Histidine 611 contacts Zn(2+). Glutamate 612 is an active-site residue. Histidine 615 and aspartate 694 together coordinate Zn(2+).

It in the N-terminal section; belongs to the AAA ATPase family. This sequence in the C-terminal section; belongs to the peptidase M41 family. The cofactor is Zn(2+).

The protein resides in the plastid. It is found in the chloroplast thylakoid membrane. Probable ATP-dependent zinc metallopeptidase. The chain is ATP-dependent zinc metalloprotease FTSH 7, chloroplastic (FTSH7) from Oryza sativa subsp. japonica (Rice).